The primary structure comprises 62 residues: Large ribosomal subunit protein eL24 (62 aa).

4 residues coordinate Zn(2+): C6, C9, C32, and C36. A C4-type zinc finger spans residues C6 to C36.

The protein belongs to the eukaryotic ribosomal protein eL24 family. Part of the 50S ribosomal subunit. Forms a cluster with proteins L3 and L14. It depends on Zn(2+) as a cofactor.

Functionally, binds to the 23S rRNA. The polypeptide is Large ribosomal subunit protein eL24 (Methanococcus maripaludis (strain C5 / ATCC BAA-1333)).